Here is a 570-residue protein sequence, read N- to C-terminus: MNSIKNGFFLCMIFLLWCHVDSGVSIDPFSHSHSLNTECVMKPPRSSETKGLLQFSRSLEDDSDEEWKIDGNGFIREMAQRIQLHQGNIYSFSAWVKLREGNDKKVGVVFRTENGRLVHGGEVRANQECWTLLKGGIVPDFSGPVDIFFESENRGAKISAHNVLLKQFSKEEWKLKQDQLIEKIRKSKVRFEVTYENKTAVKGVVISLKQTKSSFLLGCGMNFRILQSQGYRKWFASRFKITSFTNEMKWYATEKARGQENYTVADSMLKFAEDNGILVRGHTVLWDNPKMQPSWVKNIKDPNDVMNVTLNRINSVMKRYKGKLTGWDVVNENLHWDYFEKMLGANASTSFYNLAFKIDPDVRLFVNEYNTIENTKEFTATPIKVKKMMEEILAYPGNKNMKGAIGAQGHFGPTQPNLAYIRSALDTLGSLGLPIWLTEVDMPKCPNQAQYVEDILREAYSHPAVKGIIIFGGPEVSGFDKLTLADKDFNNTQTGDVIDKLLKEWQQKSSEIQTNFTADSDNEEEEVSLLHGHYNVNVSHPWIANLSTSFSLEVTKEMDQDQVIRVVISA.

Residues 1-23 (MNSIKNGFFLCMIFLLWCHVDSG) form the signal peptide. N-linked (GlcNAc...) asparagine glycans are attached at residues asparagine 197, asparagine 261, and asparagine 307. Residues 202–501 (KGVVISLKQT…TQTGDVIDKL (300 aa)) form the GH10 domain. Residue glutamate 332 is the Proton donor of the active site. A glycan (N-linked (GlcNAc...) asparagine) is linked at asparagine 346. Glutamate 439 acts as the Nucleophile in catalysis. N-linked (GlcNAc...) asparagine glycosylation is found at asparagine 490, asparagine 515, asparagine 537, and asparagine 545.

This sequence belongs to the glycosyl hydrolase 10 (cellulase F) family.

The enzyme catalyses Endohydrolysis of (1-&gt;4)-beta-D-xylosidic linkages in xylans.. The protein operates within glycan degradation; xylan degradation. Binds to and hydrolyzes insoluble and soluble xylan substrates. This chain is Endo-1,4-beta-xylanase 5-like, found in Arabidopsis thaliana (Mouse-ear cress).